A 709-amino-acid chain; its full sequence is G1/S-specific cyclin-E (709 aa).

Disordered regions lie at residues Met-1–Val-30, Ile-43–Ser-149, Val-162–Gln-205, Thr-221–Gln-289, and Ala-642–Pro-709. Polar residues-rich tracts occupy residues Ser-7–Glu-29, Pro-61–Gln-70, and Cys-91–Gly-106. Ser-114, Ser-115, Ser-117, and Ser-129 each carry phosphoserine. Over residues Val-162–Ser-175 the composition is skewed to polar residues. Ser-187, Ser-192, Ser-195, and Ser-198 each carry phosphoserine. The span at Ser-187–Pro-199 shows a compositional bias: pro residues. Residues Glu-228 to Glu-258 show a composition bias toward acidic residues. Positions Tyr-260 to Val-277 are enriched in polar residues. Thr-651 is modified (phosphothreonine). Low complexity predominate over residues Ser-677–Pro-709.

This sequence belongs to the cyclin family. Cyclin E subfamily. In terms of assembly, interacts with a member of the CDK2/CDK protein kinases to form a serine/threonine kinase holoenzyme complex. The cyclin subunit imparts substrate specificity to the complex. Interacts (via C-terminus) with Z600 (via C-terminus). As to expression, isoform II is ubiquitous in early embryos and, prior to mitosis 14, is rapidly degraded in all cells except the pole (germ) cells. Expressed during G1 phase in proliferating peripheral nervous system cells. Constitutive expression in embryonic cycles lacking a G1 phase.

It is found in the nucleus. Essential for the control of the cell cycle at the G1/S (start) transition. Targeted by archipelago for degradation by the SFC ubiquitin ligase complex. This is G1/S-specific cyclin-E (CycE) from Drosophila melanogaster (Fruit fly).